We begin with the raw amino-acid sequence, 524 residues long: MAGLLSTFDTFSSRRSESINKSGGGAVIPGQRSTVSVFVLGPSVTDDADKLFIATTFLAHSLDTDKQHSQRGGFLVSLLAMAYSSPELYLTTNGVNADVKYVIYNIEKDPKRTKTDGFIVKTRDMEYERTTEWLFGPMVNKSPLFQGQRVAADPDTLLQTYGYPACLGAIIVQVWIVLVKAITSSAGLRKGFFNRLEAFRQDGTVKGALVFTGETVEGIGSVMRSQQSLVSLMVETLVTMNTARSDLTTLEKNIQIVGNYIRDAGLASFMNTIKYGVETKMAALTLSNLRPDINKLRSLIDTYLSKGPRAPFICILKDPVHGEFAPGNYPALWSYAMGVAVVQNKAMQQYVTGGTYLDMEMFLLGQAVAKDAESKISSALEDELGVTDTAKERLRHHLANLSGGDGAYHEPTGGGAIEVALDNADIDLETEAHADQDARGWGGESGERWARQVSGGHFVTLHGAERLEEETNDEDVSDIERRIAMRLAERRQEDSATHGDEGRNNGVDHDEDDDAAAVAGIGGI.

Residues 1–404 are ncore; the sequence is MAGLLSTFDT…RHHLANLSGG (404 aa). Lysine 180, lysine 190, arginine 195, tyrosine 260, and tyrosine 350 together coordinate RNA. Positions 405–524 are ntail; the sequence is DGAYHEPTGG…AAAVAGIGGI (120 aa). The tract at residues 440 to 461 is homomultimerization; sequence GWGGESGERWARQVSGGHFVTL. Positions 462–471 are interaction with the phosphoprotein; sequence HGAERLEEET. A compositionally biased stretch (basic and acidic residues) spans 487 to 508; sequence LAERRQEDSATHGDEGRNNGVD. The tract at residues 487 to 524 is disordered; that stretch reads LAERRQEDSATHGDEGRNNGVDHDEDDDAAAVAGIGGI.

Belongs to the paramyxoviruses nucleocapsid family. As to quaternary structure, homomultimer; forms the nucleocapsid. Binds to the viral genomic RNA. N0 interacts with the phosphoprotein (via N-terminus); this interaction allows P to chaperon N0 to avoid N polymerization before encapsidation. Interacts as N-RNA template with the phosphoprotein (via C-terminus); this interaction positions the polymerase on the template.

Its subcellular location is the virion. The protein localises to the host cytoplasm. Forms the helical nucleocapsid (NC) in a ratio of 1 N per 6 ribonucleotides, protecting the genome from nucleases. The encapsidated genomic RNA serves as template for transcription and replication; encapsidation by N is coupled to RNA synthesis. Forms the encapsidation complex with the phosphoprotein protein P. Before encapsidation, the newly synthesized free N protein, so-called N0, is chaperoned by P. In Sendai virus (strain Fushimi) (SeV), this protein is Nucleoprotein (N).